Consider the following 249-residue polypeptide: Methionine aminopeptidase 2 (249 aa).

His-76 contacts substrate. A divalent metal cation-binding residues include Asp-94, Asp-105, and His-168. His-175 contacts substrate. Positions 202 and 233 each coordinate a divalent metal cation.

In terms of assembly, monomer. It depends on Co(2+) as a cofactor. Requires Zn(2+) as cofactor. Mn(2+) serves as cofactor. The cofactor is Fe(2+).

The protein localises to the cytoplasm. It carries out the reaction Release of N-terminal amino acids, preferentially methionine, from peptides and arylamides.. Functionally, removes the N-terminal methionine from nascent proteins. The N-terminal methionine is often cleaved when the second residue in the primary sequence is small and uncharged (Met-Ala-, Cys, Gly, Pro, Ser, Thr, or Val). Requires deformylation of the N(alpha)-formylated initiator methionine before it can be hydrolyzed. This Bacillus subtilis (strain 168) protein is Methionine aminopeptidase 2.